The chain runs to 435 residues: NADH-quinone oxidoreductase subunit D (435 aa).

The protein belongs to the complex I 49 kDa subunit family. NDH-1 is composed of 14 different subunits. Subunits NuoB, C, D, E, F, and G constitute the peripheral sector of the complex.

The protein localises to the cell membrane. The enzyme catalyses a quinone + NADH + 5 H(+)(in) = a quinol + NAD(+) + 4 H(+)(out). In terms of biological role, NDH-1 shuttles electrons from NADH, via FMN and iron-sulfur (Fe-S) centers, to quinones in the respiratory chain. The immediate electron acceptor for the enzyme in this species is believed to be ubiquinone. Couples the redox reaction to proton translocation (for every two electrons transferred, four hydrogen ions are translocated across the cytoplasmic membrane), and thus conserves the redox energy in a proton gradient. The chain is NADH-quinone oxidoreductase subunit D from Stenotrophomonas maltophilia (strain K279a).